The chain runs to 409 residues: Arginine deiminase (409 aa).

Residue Cys-399 is the Amidino-cysteine intermediate of the active site.

This sequence belongs to the arginine deiminase family.

It localises to the cytoplasm. It carries out the reaction L-arginine + H2O = L-citrulline + NH4(+). Its pathway is amino-acid degradation; L-arginine degradation via ADI pathway; carbamoyl phosphate from L-arginine: step 1/2. This Borrelia garinii subsp. bavariensis (strain ATCC BAA-2496 / DSM 23469 / PBi) (Borreliella bavariensis) protein is Arginine deiminase.